Reading from the N-terminus, the 443-residue chain is Zinc finger CCCH domain-containing protein 63 (443 aa).

2 disordered regions span residues 1 to 29 (MDFD…MAPT) and 56 to 99 (LPGP…SSSW). 2 C3H1-type zinc fingers span residues 30-56 (DTRQ…HREL) and 109-136 (TKTE…HCWS). WD repeat units follow at residues 149–190 (GHEK…GVLK), 228–265 (GPVG…NCFE), 272–311 (GHTL…QTLT), 313–349 (HSSV…NLEV), 354–396 (KEEH…LFIR), and 404–442 (FAKQ…TAAL).

The polypeptide is Zinc finger CCCH domain-containing protein 63 (ZFWD2) (Arabidopsis thaliana (Mouse-ear cress)).